A 380-amino-acid chain; its full sequence is Adaptive-response sensory kinase SasA (380 aa).

The tract at residues 20–101 (LLFVANRPGD…QKVDYWWPRW (82 aa)) is kaiB-like domain, interacts with KaiC. In terms of domain architecture, Histidine kinase spans 157-380 (LLAHELRNPL…CFHFTLPVYS (224 aa)). At His160 the chain carries Phosphohistidine; by autocatalysis.

As to quaternary structure, homotrimer with a small amount of possible homohexamer; a protein fragment of 109-380 is also a homotrimer. Interacts with KaiC, probably as 1 SasA trimer:1 KaiC homohexamer; unphosphorylated SasA has the highest affinity. Homodimer. Binds to the B-loop in the CI domain of KaiC; SasA and KaiB(fs) compete to bind to the CI domain. Binds preferentially to doubly phosphorylated KaiC. In terms of processing, autophosphorylates, probably on His-160.

It catalyses the reaction ATP + protein L-histidine = ADP + protein N-phospho-L-histidine.. Functionally, member of the two-component regulatory system SasA/RpaA involved in genome-wide circadian gene expression. One of several clock output pathways. Participates in the Kai clock protein complex, the main circadian regulator in cyanobacteria, via its interaction with KaiC. KaiC enhances the autophosphorylation activity of SasA, which then transfers its phosphate group to RpaA to activate it. In addition to its output function, recruits fold-shifted KaiB (KaiB(fs)) to KaiC to cooperatively form the KaiB(6):KaiC(6) complex (independent of SasA kinase activity). Required for robustness of the circadian rhythm of gene expression and is involved in clock output, also required for adaptation to light/dark cycles. The protein is Adaptive-response sensory kinase SasA of Thermosynechococcus vestitus (strain NIES-2133 / IAM M-273 / BP-1).